The following is a 401-amino-acid chain: Exodeoxyribonuclease 7 large subunit (401 aa).

This sequence belongs to the XseA family. In terms of assembly, heterooligomer composed of large and small subunits.

It is found in the cytoplasm. The catalysed reaction is Exonucleolytic cleavage in either 5'- to 3'- or 3'- to 5'-direction to yield nucleoside 5'-phosphates.. Bidirectionally degrades single-stranded DNA into large acid-insoluble oligonucleotides, which are then degraded further into small acid-soluble oligonucleotides. In Clostridioides difficile (strain 630) (Peptoclostridium difficile), this protein is Exodeoxyribonuclease 7 large subunit.